The following is a 251-amino-acid chain: Hydroxyacylglutathione hydrolase (251 aa).

The Zn(2+) site is built by His-55, His-57, Asp-59, His-60, His-112, Asp-131, and His-169.

It belongs to the metallo-beta-lactamase superfamily. Glyoxalase II family. As to quaternary structure, monomer. Zn(2+) is required as a cofactor.

It catalyses the reaction an S-(2-hydroxyacyl)glutathione + H2O = a 2-hydroxy carboxylate + glutathione + H(+). It functions in the pathway secondary metabolite metabolism; methylglyoxal degradation; (R)-lactate from methylglyoxal: step 2/2. In terms of biological role, thiolesterase that catalyzes the hydrolysis of S-D-lactoyl-glutathione to form glutathione and D-lactic acid. This is Hydroxyacylglutathione hydrolase from Erythrobacter litoralis (strain HTCC2594).